The primary structure comprises 212 residues: MASLFSGRILIRNNSDQDELDTEAEVSRRLENRLVLLFFGAGACPQCQAFVPILKDFFVRLTDEFYVLRAAQLALVYVSQDSTEEQQDLFLKDMPKKWLFLPFEDDLRRDLGRQFSVERLPAVVVLKPDGDVLTRDGADEIQRLGTACFANWQEAAEVLDRNFQLPEDLEDQEPRSLTECLRRHKYRVEKAARGGRDPGGGGGEEGGAGGLF.

A Thioredoxin domain is found at 1 to 164 (MASLFSGRIL…AAEVLDRNFQ (164 aa)). The disordered stretch occupies residues 191–212 (AARGGRDPGGGGGEEGGAGGLF). Positions 197-212 (DPGGGGGEEGGAGGLF) are enriched in gly residues.

This sequence belongs to the nucleoredoxin family. As to quaternary structure, interacts with isoform 1 of BSG.

It is found in the cell projection. The protein resides in the cilium. Its subcellular location is the photoreceptor outer segment. Its function is as follows. Plays an important role in retinal cone photoreceptor survival. In association with glucose transporter SLC16A1/GLUT1 and BSG, promotes retinal cone survival by enhancing aerobic glycolysis and accelerating the entry of glucose into photoreceptors. May play a role in cone cell viability, slowing down cone degeneration, does not seem to play a role in degenerating rods. This Homo sapiens (Human) protein is Nucleoredoxin-like protein 1 (NXNL1).